Reading from the N-terminus, the 292-residue chain is Brix domain-containing protein ZK795.3 (292 aa).

Residues 78-259 (PKIVITTSRD…PYQIKLGTLE (182 aa)) form the Brix domain.

This is Brix domain-containing protein ZK795.3 from Caenorhabditis elegans.